The following is a 289-amino-acid chain: F-box protein PP2-A11 (289 aa).

Residues 23–69 enclose the F-box domain; it reads QPGLGDLPESCVALILQNLDPVEICRFSKLNTAFHGASWADFVWESK.

Part of a SCF (ASK-cullin-F-box) protein ligase complex. Interacts with SKP1A/ASK1.

It is found in the nucleus. The protein operates within protein modification; protein ubiquitination. Functionally, component of SCF(ASK-cullin-F-box) E3 ubiquitin ligase complexes, which may mediate the ubiquitination and subsequent proteasomal degradation of target proteins. The polypeptide is F-box protein PP2-A11 (PP2A11) (Arabidopsis thaliana (Mouse-ear cress)).